The following is a 480-amino-acid chain: MTVRVRIAPSPTGNLHIGTARTAVFNWLFARHHRGKFILRVEDTDLERSRPEYTENIQAGLQWLGLNWDEGPFFQTQRLNYYRQAIQTLLDRGLAYRCYCTPEELEKMREEQKARNLAPRYDNRHRYLTPEQQAQFEQAGRKAVIRFIIDDDQEIIWQDLIREKVIWKGSDLGGDMVIARTSENGEENFGQPLYNLAVVVDDIDMEITHVIRGEDHIANTAKQILLYEALGAKVPEFAHSPLILNQEGRKLSKRDGVTSIDDFRKLGFLPQALVNYMTLLGWTPPDSTEEIFTLEAAAEVFSLERVNKAGAKFDWTKLDWINSQYLHRLTGEELVPLLLPYWQEAGYNFAAETDRAWLIGLATLIGPSLTRLSDAVAESRLLLTPLANYNQEALSQLQLEGVKDIIKDILAAITPDLTGEVAKGIVETTTKAHRVKKGLVMKSLRAALMGELHGPDLMQSWLLLNQKGWDISRLQQAVNS.

The short motif at 9–19 (PSPTGNLHIGT) is the 'HIGH' region element. A 'KMSKS' region motif is present at residues 250–254 (KLSKR). K253 serves as a coordination point for ATP.

This sequence belongs to the class-I aminoacyl-tRNA synthetase family. Glutamate--tRNA ligase type 1 subfamily. Monomer.

The protein resides in the cytoplasm. The enzyme catalyses tRNA(Glu) + L-glutamate + ATP = L-glutamyl-tRNA(Glu) + AMP + diphosphate. Its function is as follows. Catalyzes the attachment of glutamate to tRNA(Glu) in a two-step reaction: glutamate is first activated by ATP to form Glu-AMP and then transferred to the acceptor end of tRNA(Glu). The polypeptide is Glutamate--tRNA ligase (Microcystis aeruginosa (strain NIES-843 / IAM M-2473)).